The chain runs to 640 residues: Threonine--tRNA ligase (640 aa).

Residues 1 to 61 form the TGS domain; that stretch reads MPTITLPDGS…ENDASLQIIT (61 aa). The interval 242–533 is catalytic; it reads DHRKIGKRLG…LIEHYEGAFP (292 aa). Cys-333, His-384, and His-510 together coordinate Zn(2+).

It belongs to the class-II aminoacyl-tRNA synthetase family. Homodimer. Requires Zn(2+) as cofactor.

The protein resides in the cytoplasm. It carries out the reaction tRNA(Thr) + L-threonine + ATP = L-threonyl-tRNA(Thr) + AMP + diphosphate + H(+). Functionally, catalyzes the attachment of threonine to tRNA(Thr) in a two-step reaction: L-threonine is first activated by ATP to form Thr-AMP and then transferred to the acceptor end of tRNA(Thr). Also edits incorrectly charged L-seryl-tRNA(Thr). This Pseudomonas syringae pv. tomato (strain ATCC BAA-871 / DC3000) protein is Threonine--tRNA ligase.